Here is a 305-residue protein sequence, read N- to C-terminus: Ribosomal RNA small subunit methyltransferase H (305 aa).

Residues 30–32 (GGH), D49, F74, D96, and Q103 contribute to the S-adenosyl-L-methionine site.

This sequence belongs to the methyltransferase superfamily. RsmH family.

It localises to the cytoplasm. It catalyses the reaction cytidine(1402) in 16S rRNA + S-adenosyl-L-methionine = N(4)-methylcytidine(1402) in 16S rRNA + S-adenosyl-L-homocysteine + H(+). Its function is as follows. Specifically methylates the N4 position of cytidine in position 1402 (C1402) of 16S rRNA. This chain is Ribosomal RNA small subunit methyltransferase H, found in Francisella tularensis subsp. mediasiatica (strain FSC147).